The following is a 178-amino-acid chain: Large ribosomal subunit protein uL6 (178 aa).

It belongs to the universal ribosomal protein uL6 family. In terms of assembly, part of the 50S ribosomal subunit.

In terms of biological role, this protein binds to the 23S rRNA, and is important in its secondary structure. It is located near the subunit interface in the base of the L7/L12 stalk, and near the tRNA binding site of the peptidyltransferase center. In Leifsonia xyli subsp. xyli (strain CTCB07), this protein is Large ribosomal subunit protein uL6.